The chain runs to 172 residues: NADH-ubiquinone oxidoreductase chain 6 (172 aa).

5 helical membrane passes run 1 to 21, 25 to 45, 53 to 73, 86 to 106, and 140 to 160; these read MTYF…AVAS, PYFA…VLVG, LVLF…AALA, VLGY…IFWG, and GGML…VLEL.

This sequence belongs to the complex I subunit 6 family.

Its subcellular location is the mitochondrion membrane. The enzyme catalyses a ubiquinone + NADH + 5 H(+)(in) = a ubiquinol + NAD(+) + 4 H(+)(out). Its function is as follows. Core subunit of the mitochondrial membrane respiratory chain NADH dehydrogenase (Complex I) that is believed to belong to the minimal assembly required for catalysis. Complex I functions in the transfer of electrons from NADH to the respiratory chain. The immediate electron acceptor for the enzyme is believed to be ubiquinone. This is NADH-ubiquinone oxidoreductase chain 6 (MT-ND6) from Cyprinus carpio (Common carp).